Here is a 219-residue protein sequence, read N- to C-terminus: Glutathione S-transferase 3 (219 aa).

The GST N-terminal domain occupies 3-82; the sequence is DEVVLLDTWA…YIDEVWNDKS (80 aa). Glutathione-binding positions include serine 13, isoleucine 54, and 66–67; that span reads ES. Positions 88-216 constitute a GST C-terminal domain; it reads DPYKRSQARF…GLIVELQKTL (129 aa).

Belongs to the GST superfamily. HSP26 family. As to quaternary structure, homodimer. degradation; (R)-lactate from methylglyoxal: step 1/2.

The catalysed reaction is RX + glutathione = an S-substituted glutathione + a halide anion + H(+). In terms of biological role, conjugation of reduced glutathione to a wide number of exogenous and endogenous hydrophobic electrophiles. Involved in the detoxification of certain herbicides. The sequence is that of Glutathione S-transferase 3 (GST3) from Glycine max (Soybean).